Consider the following 199-residue polypeptide: NAD(P)H dehydrogenase (quinone) (199 aa).

One can recognise a Flavodoxin-like domain in the interval 4-190 (VLVLYYSTYG…DGARYQGRHV (187 aa)). FMN contacts are provided by residues 10 to 15 (STYGHI) and 78 to 80 (TRY). Tyr12 contributes to the NAD(+) binding site. Residue Trp98 coordinates substrate. FMN is bound by residues 113–119 (SSASQHG) and His134.

This sequence belongs to the WrbA family. It depends on FMN as a cofactor.

The enzyme catalyses a quinone + NADH + H(+) = a quinol + NAD(+). It carries out the reaction a quinone + NADPH + H(+) = a quinol + NADP(+). In Methylobacterium sp. (strain 4-46), this protein is NAD(P)H dehydrogenase (quinone).